The sequence spans 680 residues: Tumor protein 63 (680 aa).

Residues 1–107 (MNFETSRCAT…MQDSDLSDPM (107 aa)) are transcription activation. Residues 123–157 (QIQNGSSSTSPYNTDHAQNSVTAPSPYAQPSSTFD) show a composition bias toward polar residues. Residues 123 to 171 (QIQNGSSSTSPYNTDHAQNSVTAPSPYAQPSSTFDALSPSPAIPSNTDY) form a disordered region. Residues 170 to 362 (DYPGPHSFDV…KADEDSIRKQ (193 aa)) mediate DNA binding. Residues Cys-244, His-247, Cys-308, and Cys-312 each coordinate Zn(2+). The segment covering 351-360 (DRKADEDSIR) has biased composition (basic and acidic residues). Disordered regions lie at residues 351–393 (DRKA…IKKR) and 435–472 (YRQQ…MNSM). An interaction with HIPK2 region spans residues 352 to 388 (RKADEDSIRKQQVSDSTKNGDGTKRPFRQNTHGIQMT). Composition is skewed to polar residues over residues 361 to 371 (KQQVSDSTKNG) and 379 to 389 (RQNTHGIQMTS). The oligomerization stretch occupies residues 394-443 (RSPDDELLYLPVRGRETYEMLLKIKESLELMQYLPQHTIETYRQQQQQQH). Residues 437–450 (QQQQQQHQHLLQKQ) are compositionally biased toward low complexity. Positions 451–472 (TSIQSPSSYGNSSPPLNKMNSM) are enriched in polar residues. Residues 541 to 607 (PPYPTDCSIV…WKGILDHRQL (67 aa)) form the SAM domain. Positions 610-680 (FSSPSHLLRT…KQQRIKEEGE (71 aa)) are transactivation inhibition. A Glycyl lysine isopeptide (Lys-Gly) (interchain with G-Cter in SUMO) cross-link involves residue Lys-676.

This sequence belongs to the p53 family. As to quaternary structure, binds DNA as a homotetramer. Isoform composition of the tetramer may determine transactivation activity. Isoforms Alpha and Gamma interact with HIPK2. Interacts with SSRP1, leading to stimulate coactivator activity. Isoform 1 and isoform 2 interact with WWP1. Interacts with PDS5A. Isoform 5 (via activation domain) interacts with NOC2L. Requires Zn(2+) as cofactor. Post-translationally, may be sumoylated. Ubiquitinated. Polyubiquitination involves WWP1 and leads to proteasomal degradation of this protein. As to expression, widely expressed, notably in heart, kidney, placenta, prostate, skeletal muscle, testis and thymus, although the precise isoform varies according to tissue type. Progenitor cell layers of skin, breast, eye and prostate express high levels of DeltaN-type isoforms. Isoform 10 is predominantly expressed in skin squamous cell carcinomas, but not in normal skin tissues.

It localises to the nucleus. In terms of biological role, acts as a sequence specific DNA binding transcriptional activator or repressor. The isoforms contain a varying set of transactivation and auto-regulating transactivation inhibiting domains thus showing an isoform specific activity. Isoform 2 activates RIPK4 transcription. May be required in conjunction with TP73/p73 for initiation of p53/TP53 dependent apoptosis in response to genotoxic insults and the presence of activated oncogenes. Involved in Notch signaling by probably inducing JAG1 and JAG2. Plays a role in the regulation of epithelial morphogenesis. The ratio of DeltaN-type and TA*-type isoforms may govern the maintenance of epithelial stem cell compartments and regulate the initiation of epithelial stratification from the undifferentiated embryonal ectoderm. Required for limb formation from the apical ectodermal ridge. Activates transcription of the p21 promoter. The protein is Tumor protein 63 (TP63) of Homo sapiens (Human).